Consider the following 318-residue polypeptide: Olfactory receptor 56A1 (318 aa).

At 1 to 32 (MIQPMASPSNSSTVPVSEFLLICFPNFQSWQH) the chain is on the extracellular side. Asn-10 is a glycosylation site (N-linked (GlcNAc...) asparagine). Residues 33–53 (WLSLPLSLLFLLAMGANTTLL) form a helical membrane-spanning segment. The Cytoplasmic segment spans residues 54–61 (ITIQLEAS). The helical transmembrane segment at 62 to 82 (LHQPLYYLLSLLSLLDIVLCL) threads the bilayer. Topologically, residues 83–106 (TVIPKVLAIFWYDLRSISFPACFL) are extracellular. Cysteines 104 and 196 form a disulfide. The helical transmembrane segment at 107–127 (QMFIMNSFLPMESCTFMVMAY) threads the bilayer. The Cytoplasmic portion of the chain corresponds to 128 to 146 (DRYVAICHPLRYPSIITNQ). The chain crosses the membrane as a helical span at residues 147-167 (FVAKASVFIVVRNALLTAPIP). The Extracellular segment spans residues 168–203 (ILTSLLHYCGENVIENCICANLSVSRLSCDNFTLNR). N-linked (GlcNAc...) asparagine glycans are attached at residues Asn-188 and Asn-198. The chain crosses the membrane as a helical span at residues 204 to 224 (IYQFVAGWTLLGSDLFLIFLS). Topologically, residues 225 to 244 (YTFILRAVLRFKAEGAAVKA) are cytoplasmic. The chain crosses the membrane as a helical span at residues 245–265 (LSTCGSHFILILFFSTILLVV). The Extracellular segment spans residues 266–280 (VLTNVARKKVPMDIL). The chain crosses the membrane as a helical span at residues 281-301 (ILLNVLHHLIPPALNPIVYGV). The Cytoplasmic segment spans residues 302-318 (RTKEIKQGIQKLLQRGR).

Belongs to the G-protein coupled receptor 1 family.

It localises to the cell membrane. Its function is as follows. Odorant receptor. The protein is Olfactory receptor 56A1 (OR56A1) of Homo sapiens (Human).